Consider the following 255-residue polypeptide: 4-hydroxy-tetrahydrodipicolinate reductase (255 aa).

Residues 9 to 14 (GFKGKM), 89 to 91 (GTT), and 115 to 118 (APNF) each bind NAD(+). His145 functions as the Proton donor/acceptor in the catalytic mechanism. (S)-2,3,4,5-tetrahydrodipicolinate is bound at residue His146. The Proton donor role is filled by Lys149. A (S)-2,3,4,5-tetrahydrodipicolinate-binding site is contributed by 155 to 156 (GT).

It belongs to the DapB family.

The protein localises to the cytoplasm. The catalysed reaction is (S)-2,3,4,5-tetrahydrodipicolinate + NAD(+) + H2O = (2S,4S)-4-hydroxy-2,3,4,5-tetrahydrodipicolinate + NADH + H(+). It carries out the reaction (S)-2,3,4,5-tetrahydrodipicolinate + NADP(+) + H2O = (2S,4S)-4-hydroxy-2,3,4,5-tetrahydrodipicolinate + NADPH + H(+). Its pathway is amino-acid biosynthesis; L-lysine biosynthesis via DAP pathway; (S)-tetrahydrodipicolinate from L-aspartate: step 4/4. Functionally, catalyzes the conversion of 4-hydroxy-tetrahydrodipicolinate (HTPA) to tetrahydrodipicolinate. In Streptococcus sanguinis (strain SK36), this protein is 4-hydroxy-tetrahydrodipicolinate reductase.